A 388-amino-acid chain; its full sequence is Dual-specificity RNA methyltransferase RlmN (388 aa).

E109 (proton acceptor) is an active-site residue. The Radical SAM core domain occupies 115–354 (EDDRATLCVS…TIVRKTRGDD (240 aa)). A disulfide bond links C122 and C359. [4Fe-4S] cluster is bound by residues C129, C133, and C136. Residues 183-184 (GE), S215, 237-239 (SLH), and N316 each bind S-adenosyl-L-methionine. C359 (S-methylcysteine intermediate) is an active-site residue.

This sequence belongs to the radical SAM superfamily. RlmN family. It depends on [4Fe-4S] cluster as a cofactor.

The protein localises to the cytoplasm. It carries out the reaction adenosine(2503) in 23S rRNA + 2 reduced [2Fe-2S]-[ferredoxin] + 2 S-adenosyl-L-methionine = 2-methyladenosine(2503) in 23S rRNA + 5'-deoxyadenosine + L-methionine + 2 oxidized [2Fe-2S]-[ferredoxin] + S-adenosyl-L-homocysteine. It catalyses the reaction adenosine(37) in tRNA + 2 reduced [2Fe-2S]-[ferredoxin] + 2 S-adenosyl-L-methionine = 2-methyladenosine(37) in tRNA + 5'-deoxyadenosine + L-methionine + 2 oxidized [2Fe-2S]-[ferredoxin] + S-adenosyl-L-homocysteine. In terms of biological role, specifically methylates position 2 of adenine 2503 in 23S rRNA and position 2 of adenine 37 in tRNAs. m2A2503 modification seems to play a crucial role in the proofreading step occurring at the peptidyl transferase center and thus would serve to optimize ribosomal fidelity. The sequence is that of Dual-specificity RNA methyltransferase RlmN from Salmonella arizonae (strain ATCC BAA-731 / CDC346-86 / RSK2980).